The following is a 147-amino-acid chain: Hemoglobin subunit epsilon (147 aa).

The region spanning 3-147 (HFTAEEKSTI…VATALAHKYH (145 aa)) is the Globin domain. S14 and S51 each carry phosphoserine. Heme b contacts are provided by H64 and H93.

It belongs to the globin family. In terms of assembly, heterotetramer of two alpha chains and two epsilon chains in early embryonic hemoglobin Gower-2; two zeta chains and two epsilon chains in early embryonic hemoglobin Gower-1. Red blood cells.

The epsilon chain is a beta-type chain of early mammalian embryonic hemoglobin. The sequence is that of Hemoglobin subunit epsilon (HBE1) from Eulemur fulvus fulvus (Brown lemur).